Here is a 95-residue protein sequence, read N- to C-terminus: Aspartyl/glutamyl-tRNA(Asn/Gln) amidotransferase subunit C (95 aa).

This sequence belongs to the GatC family. As to quaternary structure, heterotrimer of A, B and C subunits.

It catalyses the reaction L-glutamyl-tRNA(Gln) + L-glutamine + ATP + H2O = L-glutaminyl-tRNA(Gln) + L-glutamate + ADP + phosphate + H(+). The catalysed reaction is L-aspartyl-tRNA(Asn) + L-glutamine + ATP + H2O = L-asparaginyl-tRNA(Asn) + L-glutamate + ADP + phosphate + 2 H(+). Allows the formation of correctly charged Asn-tRNA(Asn) or Gln-tRNA(Gln) through the transamidation of misacylated Asp-tRNA(Asn) or Glu-tRNA(Gln) in organisms which lack either or both of asparaginyl-tRNA or glutaminyl-tRNA synthetases. The reaction takes place in the presence of glutamine and ATP through an activated phospho-Asp-tRNA(Asn) or phospho-Glu-tRNA(Gln). The polypeptide is Aspartyl/glutamyl-tRNA(Asn/Gln) amidotransferase subunit C (Acidiphilium cryptum (strain JF-5)).